Consider the following 420-residue polypeptide: L-cysteine:1D-myo-inositol 2-amino-2-deoxy-alpha-D-glucopyranoside ligase (420 aa).

Cysteine 43 provides a ligand contact to Zn(2+). Residues 43–46 (CGIT), threonine 58, and 81–83 (NIT) each bind L-cysteinyl-5'-AMP. A 'HIGH' region motif is present at residues 45–55 (ITPYDATHLGH). A 'ERGGDP' region motif is present at residues 187 to 192 (ERGGDP). Residue tryptophan 227 coordinates L-cysteinyl-5'-AMP. Cysteine 231 is a binding site for Zn(2+). 249–251 (GSD) provides a ligand contact to L-cysteinyl-5'-AMP. Histidine 256 serves as a coordination point for Zn(2+). Isoleucine 289 contacts L-cysteinyl-5'-AMP. The short motif at 295-299 (KMSKS) is the 'KMSKS' region element.

This sequence belongs to the class-I aminoacyl-tRNA synthetase family. MshC subfamily. In terms of assembly, monomer. It depends on Zn(2+) as a cofactor.

It catalyses the reaction 1D-myo-inositol 2-amino-2-deoxy-alpha-D-glucopyranoside + L-cysteine + ATP = 1D-myo-inositol 2-(L-cysteinylamino)-2-deoxy-alpha-D-glucopyranoside + AMP + diphosphate + H(+). Functionally, catalyzes the ATP-dependent condensation of GlcN-Ins and L-cysteine to form L-Cys-GlcN-Ins. This Segniliparus rotundus (strain ATCC BAA-972 / CDC 1076 / CIP 108378 / DSM 44985 / JCM 13578) protein is L-cysteine:1D-myo-inositol 2-amino-2-deoxy-alpha-D-glucopyranoside ligase.